The sequence spans 139 residues: Protein archease (139 aa).

Residues aspartate 12, aspartate 138, and isoleucine 139 each coordinate Ca(2+).

This sequence belongs to the archease family.

Activates the tRNA-splicing ligase complex by facilitating the enzymatic turnover of catalytic subunit RtcB. Acts by promoting the guanylylation of RtcB, a key intermediate step in tRNA ligation. Can also alter the NTP specificity of RtcB such that ATP, dGTP or ITP is used efficiently. This is Protein archease from Saccharolobus islandicus (strain M.16.27) (Sulfolobus islandicus).